A 196-amino-acid polypeptide reads, in one-letter code: Alpha-crystallin A chain (196 aa).

N-acetylmethionine is present on methionine 1. Residues 1-63 (MDVTIQHPWF…RTVLDSGISE (63 aa)) are required for complex formation with BFSP1 and BFSP2. Glutamine 6 is subject to Deamidated glutamine; partial. Phosphoserine is present on serine 45. Glutamine 50 is subject to Deamidated glutamine; partial. The 110-residue stretch at 76–185 (HAGNPKNNPI…GHSERAIPVS (110 aa)) folds into the sHSP domain. N6-acetyllysine is present on residues lysine 93 and lysine 122. Position 123 (histidine 123) interacts with Zn(2+). Asparagine 124 bears the Deamidated asparagine; partial mark. Residues glutamate 125 and histidine 130 each contribute to the Zn(2+) site. Position 145 is a phosphoserine (serine 145). A Deamidated asparagine; partial modification is found at asparagine 146. A disordered region spans residues 168 to 196 (KVQSGLDAGHSERAIPVSREEKPSSAPSS). Deamidated glutamine; partial is present on glutamine 170. Over residues 176-190 (GHSERAIPVSREEKP) the composition is skewed to basic and acidic residues. A Zn(2+)-binding site is contributed by histidine 177. Serine 185 carries an O-linked (GlcNAc) serine glycan.

It belongs to the small heat shock protein (HSP20) family. In terms of assembly, heteromer composed of three CRYAA and one CRYAB subunits. Inter-subunit bridging via zinc ions enhances stability, which is crucial as there is no protein turn over in the lens. Can also form homodimers and homotetramers (dimers of dimers) which serve as the building blocks of homooligomers. Within homooligomers, the zinc-binding motif is created from residues of 3 different molecules. His-123 and Glu-125 from one molecule are ligands of the zinc ion, and His-130 and His-177 residues from additional molecules complete the site with tetrahedral coordination geometry. Part of a complex required for lens intermediate filament formation composed of BFSP1, BFSP2 and CRYAA. Post-translationally, acetylation at Lys-93 may increase chaperone activity. In terms of processing, undergoes age-dependent proteolytical cleavage at the C-terminus.

It localises to the cytoplasm. The protein localises to the nucleus. Contributes to the transparency and refractive index of the lens. Acts as a chaperone, preventing aggregation of various proteins under a wide range of stress conditions. Required for the correct formation of lens intermediate filaments as part of a complex composed of BFSP1, BFSP2 and CRYAA. In Mesocricetus auratus (Golden hamster), this protein is Alpha-crystallin A chain (CRYAA).